The sequence spans 902 residues: Gamma-tubulin complex component 2 (902 aa).

Phosphotyrosine is present on Tyr83. A disordered region spans residues 874 to 902; that stretch reads AERSQKATPQVPVLRGPPAPAPRVAVTAQ.

It belongs to the TUBGCP family. In terms of assembly, component of the gamma-tubulin ring complex (gTuRC) consisting of TUBGCP2, TUBGCP3, TUBGCP4, TUBGCP5 and TUBGCP6 and gamma-tubulin TUBG1 or TUBG2. TUBGCP2, TUBGCP3, TUBGCP4, TUBGCP5 and TUBGCP6 assemble in a 5:5:2:1:1 stoichiometry; each is associated with a gamma-tubulin, thereby arranging 14 gamma-tubulins in a helical manner. Gamma-tubulin at the first position is blocked by TUBGCP3 at the last position, allowing 13 protafilaments to grow into a microtubule. The gTuRC (via TUBGCP3 and TUBGCP6) interacts with ACTB and MZT1; the interactions form a luminal bridge that stabilizes the initial structure during complex assembly. The gTuRC (via TUBGCP2) interacts with MZT2A/MZT2B and CDK5RAP2 (via CM1 motif); the interactions play a role in gTuRC activation. Interacts with ATF5; the ATF5:PCNT:polyglutamylated tubulin (PGT) tripartite unites the mother centriole and the pericentriolar material (PCM) in the centrosome. As to expression, ubiquitously expressed.

The protein resides in the cytoplasm. Its subcellular location is the cytoskeleton. The protein localises to the microtubule organizing center. It is found in the centrosome. Component of the gamma-tubulin ring complex (gTuRC) which mediates microtubule nucleation. The gTuRC regulates the minus-end nucleation of alpha-beta tubulin heterodimers that grow into microtubule protafilaments, a critical step in centrosome duplication and spindle formation. Plays a role in neuronal migration. The chain is Gamma-tubulin complex component 2 (TUBGCP2) from Homo sapiens (Human).